The chain runs to 170 residues: MSIEVVNESGIDVAEGELVSVARFAIAAMDVHPAAELSMMLVDLAAMADLHMRWMDLPGPTDVMSFPMDELEPGGRPDAPEPGPSMLGDIVLCPQFAAEQAEAAGHSLAHELALLTVHGVLHLLGYDHAEPEEEREMFALQNQLLQDWYEQQAQLYRDSRLLDKSRNFDE.

Zn(2+) is bound by residues His118, His122, and His128.

The protein belongs to the endoribonuclease YbeY family. Zn(2+) serves as cofactor.

It localises to the cytoplasm. Functionally, single strand-specific metallo-endoribonuclease involved in late-stage 70S ribosome quality control and in maturation of the 3' terminus of the 16S rRNA. The polypeptide is Endoribonuclease YbeY (Mycobacteroides abscessus (strain ATCC 19977 / DSM 44196 / CCUG 20993 / CIP 104536 / JCM 13569 / NCTC 13031 / TMC 1543 / L948) (Mycobacterium abscessus)).